The following is a 302-amino-acid chain: Glycine--tRNA ligase alpha subunit (302 aa).

It belongs to the class-II aminoacyl-tRNA synthetase family. As to quaternary structure, tetramer of two alpha and two beta subunits.

The protein resides in the cytoplasm. It carries out the reaction tRNA(Gly) + glycine + ATP = glycyl-tRNA(Gly) + AMP + diphosphate. This is Glycine--tRNA ligase alpha subunit from Xanthomonas axonopodis pv. citri (strain 306).